The sequence spans 87 residues: Acyl-CoA-binding protein (87 aa).

Ser2 carries the post-translational modification N-acetylserine. The 86-residue stretch at 2-87 (SQAEFDKAAE…VEELKKKYGI (86 aa)) folds into the ACB domain. Position 8 is an N6-acetyllysine; alternate (Lys8). Position 8 is an N6-succinyllysine; alternate (Lys8). Lys14 is an an acyl-CoA binding site. An N6-succinyllysine modification is found at Lys17. An N6-acetyllysine modification is found at Lys19. Tyr29 is subject to Phosphotyrosine. An acyl-CoA contacts are provided by residues 29–33 (YSHYK), Lys51, Lys55, and Tyr74. Lys51 is subject to N6-acetyllysine. N6-acetyllysine; alternate is present on Lys55. Lys55 is modified (N6-succinyllysine; alternate). An N6-(2-hydroxyisobutyryl)lysine; alternate modification is found at Lys55. N6-malonyllysine; alternate is present on Lys55. Position 77 is an N6-acetyllysine; alternate (Lys77). Lys77 carries the post-translational modification N6-succinyllysine; alternate.

It belongs to the ACBP family. Monomer.

The protein resides in the endoplasmic reticulum. Its subcellular location is the golgi apparatus. Its function is as follows. Binds medium- and long-chain acyl-CoA esters with very high affinity and may function as an intracellular carrier of acyl-CoA esters. It is also able to displace diazepam from the benzodiazepine (BZD) recognition site located on the GABA type A receptor. It is therefore possible that this protein also acts as a neuropeptide to modulate the action of the GABA receptor. The sequence is that of Acyl-CoA-binding protein (DBI) from Bos taurus (Bovine).